A 378-amino-acid polypeptide reads, in one-letter code: Plant intracellular Ras-group-related LRR protein 8 (378 aa).

The Ubiquitin-like domain maps to Pro10–His86. The disordered stretch occupies residues Leu85–Asn120. Polar residues predominate over residues Thr93 to Ala106. 9 LRR repeats span residues Trp129–Cys152, Gly153–Leu176, Ser178–Cys201, Val202–Ile225, Thr226–His250, Glu252–Cys271, Glu272–Asn293, Leu294–Lys317, and Ser319–Glu344.

The protein belongs to the SHOC2 family. As to expression, widely expressed except in panicles.

Leucine-rich repeat protein that likely mediates protein interactions, possibly in the context of signal transduction. This Oryza sativa subsp. japonica (Rice) protein is Plant intracellular Ras-group-related LRR protein 8 (IRL8).